Here is a 550-residue protein sequence, read N- to C-terminus: Hydroxylamine reductase (550 aa).

4 residues coordinate [2Fe-2S] cluster: Cys-3, Cys-6, Cys-18, and Cys-25. The hybrid [4Fe-2O-2S] cluster site is built by His-249, Glu-273, Cys-317, Cys-405, Cys-433, Cys-458, Glu-492, and Lys-494. The residue at position 405 (Cys-405) is a Cysteine persulfide.

It belongs to the HCP family. Requires [2Fe-2S] cluster as cofactor. Hybrid [4Fe-2O-2S] cluster is required as a cofactor.

It is found in the cytoplasm. It catalyses the reaction A + NH4(+) + H2O = hydroxylamine + AH2 + H(+). Catalyzes the reduction of hydroxylamine to form NH(3) and H(2)O. The sequence is that of Hydroxylamine reductase from Escherichia coli O6:K15:H31 (strain 536 / UPEC).